A 362-amino-acid chain; its full sequence is Probable cinnamyl alcohol dehydrogenase 8D (362 aa).

Zn(2+) is bound at residue cysteine 45. Threonine 47 is a binding site for NADP(+). The Zn(2+) site is built by histidine 67, glutamate 68, cysteine 98, cysteine 101, cysteine 104, cysteine 112, and cysteine 161. Residues threonine 165, 186–191 (GLGGLG), 209–214 (SSSPAK), threonine 249, glycine 273, and 296–298 (NGV) each bind NADP(+).

This sequence belongs to the zinc-containing alcohol dehydrogenase family. Homodimer. The cofactor is Zn(2+).

The catalysed reaction is (E)-cinnamyl alcohol + NADP(+) = (E)-cinnamaldehyde + NADPH + H(+). It catalyses the reaction (E)-coniferol + NADP(+) = (E)-coniferaldehyde + NADPH + H(+). It carries out the reaction (E)-sinapyl alcohol + NADP(+) = (E)-sinapaldehyde + NADPH + H(+). The enzyme catalyses (E)-4-coumaroyl alcohol + NADP(+) = (E)-4-coumaraldehyde + NADPH + H(+). The catalysed reaction is (E)-caffeyl alcohol + NADP(+) = (E)-caffeyl aldehyde + NADPH + H(+). It participates in aromatic compound metabolism; phenylpropanoid biosynthesis. In terms of biological role, involved in lignin biosynthesis. Catalyzes the final step specific for the production of lignin monomers. Catalyzes the NADPH-dependent reduction of coniferaldehyde, 5-hydroxyconiferaldehyde, sinapaldehyde, 4-coumaraldehyde and caffeyl aldehyde to their respective alcohols. The chain is Probable cinnamyl alcohol dehydrogenase 8D from Oryza sativa subsp. japonica (Rice).